A 199-amino-acid chain; its full sequence is Superoxide dismutase [Mn/Fe] (199 aa).

Positions 27, 81, 161, and 165 each coordinate Fe(3+). Residues His27, His81, Asp161, and His165 each coordinate Mn(2+).

It belongs to the iron/manganese superoxide dismutase family. As to quaternary structure, homodimer. Mn(2+) serves as cofactor. It depends on Fe(3+) as a cofactor.

The catalysed reaction is 2 superoxide + 2 H(+) = H2O2 + O2. Functionally, destroys superoxide anion radicals which are normally produced within the cells and which are toxic to biological systems. Catalyzes the dismutation of superoxide anion radicals into O2 and H2O2 by successive reduction and oxidation of the transition metal ion at the active site. This Staphylococcus epidermidis protein is Superoxide dismutase [Mn/Fe] (sodA).